Here is a 165-residue protein sequence, read N- to C-terminus: Protein phosphatase 1 regulatory subunit 14C (165 aa).

Positions methionine 1–glycine 12 are enriched in low complexity. A disordered region spans residues methionine 1 to threonine 73. Serine 2 is subject to N-acetylserine. Serine 25 carries the post-translational modification Phosphoserine. Arginine 27 is subject to Omega-N-methylarginine. At serine 33 the chain carries Phosphoserine. Over residues glycine 35–glutamine 63 the composition is skewed to low complexity. Threonine 73 bears the Phosphothreonine; by ILK1 mark.

The protein belongs to the PP1 inhibitor family. Has over 600-fold higher inhibitory activity when phosphorylated, creating a molecular switch for regulating the phosphorylation status of PPP1CA substrates and smooth muscle contraction. The main inhibitory site appears to be Thr-73. In terms of tissue distribution, detected in breast cancer.

It is found in the cytoplasm. The protein resides in the membrane. In terms of biological role, inhibitor of the PP1 regulatory subunit PPP1CA. This is Protein phosphatase 1 regulatory subunit 14C (PPP1R14C) from Homo sapiens (Human).